Consider the following 138-residue polypeptide: ATP synthase epsilon chain (138 aa).

It belongs to the ATPase epsilon chain family. In terms of assembly, F-type ATPases have 2 components, CF(1) - the catalytic core - and CF(0) - the membrane proton channel. CF(1) has five subunits: alpha(3), beta(3), gamma(1), delta(1), epsilon(1). CF(0) has three main subunits: a, b and c.

Its subcellular location is the cell inner membrane. In terms of biological role, produces ATP from ADP in the presence of a proton gradient across the membrane. The polypeptide is ATP synthase epsilon chain (Geobacter sp. (strain M21)).